A 360-amino-acid chain; its full sequence is Phospho-N-acetylmuramoyl-pentapeptide-transferase (360 aa).

Transmembrane regions (helical) follow at residues 27-47 (GALF…ISLL), 70-90 (GTPT…ILLW), 98-118 (VWVT…DDYL), 134-154 (LLLE…YSPA), 168-188 (ALLN…VGAG), 199-219 (GLAI…AYLV), 239-259 (LAVV…FNAP), 263-283 (IFMG…IAVA), 288-308 (IVLA…IIQV), and 337-357 (QVVI…LATL).

This sequence belongs to the glycosyltransferase 4 family. MraY subfamily. It depends on Mg(2+) as a cofactor.

It is found in the cell inner membrane. It catalyses the reaction UDP-N-acetyl-alpha-D-muramoyl-L-alanyl-gamma-D-glutamyl-meso-2,6-diaminopimeloyl-D-alanyl-D-alanine + di-trans,octa-cis-undecaprenyl phosphate = di-trans,octa-cis-undecaprenyl diphospho-N-acetyl-alpha-D-muramoyl-L-alanyl-D-glutamyl-meso-2,6-diaminopimeloyl-D-alanyl-D-alanine + UMP. It participates in cell wall biogenesis; peptidoglycan biosynthesis. Its function is as follows. Catalyzes the initial step of the lipid cycle reactions in the biosynthesis of the cell wall peptidoglycan: transfers peptidoglycan precursor phospho-MurNAc-pentapeptide from UDP-MurNAc-pentapeptide onto the lipid carrier undecaprenyl phosphate, yielding undecaprenyl-pyrophosphoryl-MurNAc-pentapeptide, known as lipid I. The polypeptide is Phospho-N-acetylmuramoyl-pentapeptide-transferase (Methylorubrum populi (strain ATCC BAA-705 / NCIMB 13946 / BJ001) (Methylobacterium populi)).